Here is a 128-residue protein sequence, read N- to C-terminus: Ribosome-binding factor A (128 aa).

Belongs to the RbfA family. As to quaternary structure, monomer. Binds 30S ribosomal subunits, but not 50S ribosomal subunits or 70S ribosomes.

It is found in the cytoplasm. Its function is as follows. One of several proteins that assist in the late maturation steps of the functional core of the 30S ribosomal subunit. Associates with free 30S ribosomal subunits (but not with 30S subunits that are part of 70S ribosomes or polysomes). Required for efficient processing of 16S rRNA. May interact with the 5'-terminal helix region of 16S rRNA. This chain is Ribosome-binding factor A, found in Geobacillus thermodenitrificans (strain NG80-2).